A 612-amino-acid polypeptide reads, in one-letter code: Zinc metalloproteinase-disintegrin-like berythractivase (612 aa).

The first 20 residues, 1–20 (MIQVLLVIICLEAFPYQGSS), serve as a signal peptide directing secretion. Positions 21 to 187 (IILESGNVND…EPIKKASLLN (167 aa)) are excised as a propeptide. A Peptidase M12B domain is found at 200–396 (KYVEFVVVLD…NRPQCLLNKP (197 aa)). E203 contributes to the Ca(2+) binding site. N260 carries an N-linked (GlcNAc...) asparagine glycan. Position 287 (D287) interacts with Ca(2+). 3 cysteine pairs are disulfide-bonded: C311-C391, C351-C375, and C353-C358. H336 is a Zn(2+) binding site. E337 is a catalytic residue. Residues H340 and H346 each contribute to the Zn(2+) site. An N-linked (GlcNAc...) asparagine glycan is attached at N348. N-linked (GlcNAc...) asparagine glycosylation is present at N374. Positions 391, 394, 406, 409, 411, 413, 416, and 419 each coordinate Ca(2+). The region spanning 404–490 (PPVCGNELLE…DCPMDDFQRN (87 aa)) is the Disintegrin domain. 14 cysteine pairs are disulfide-bonded: C407-C436, C418-C431, C420-C426, C430-C453, C444-C450, C449-C475, C462-C482, C469-C501, C494-C506, C513-C563, C528-C574, C541-C551, C558-C600, and C594-C605. Residue N432 is glycosylated (N-linked (GlcNAc...) asparagine). A D/ECD-tripeptide motif is present at residues 468–470 (DCD). Positions 470, 471, 473, and 485 each coordinate Ca(2+).

Belongs to the venom metalloproteinase (M12B) family. P-III subfamily. P-IIIa sub-subfamily. In terms of assembly, monomer. It depends on Zn(2+) as a cofactor. Highly glycosylated. In terms of tissue distribution, expressed by the venom gland.

It is found in the secreted. Inhibited by EDTA and o-phenanthroline. Not inhibited by PMSF, benzamidine, irreversible serine-proteinase inhibitors and cysteine proteinase inhibitor E-64. In terms of biological role, potent activator of prothrombin (F2). Does not elicit any hemorrhagic response. Barely inhibits collagen-induced platelet aggregation. Binds neither collagen, nor the jararhagin monoclonal antibody MAJar3. Hydrolyzes the Aalpha-chain of fibrin and fibrinogen, without affecting the Bbeta- and gamma-chains. Is capable of triggering endothelial pro-inflammatory and procoagulant cell responses, but fails to trigger apoptosis. Induces von Willebrand factor release, and the expression of both ICAM1 and E-selectin (SELE) (without increase in VCAM1) in endothelial cells (HUVEC). Is also able to up-regulate the synthesis of the coagulation factor TF (F3). Enhances nitric oxide (NO) generation, prostacyclin production and interleukin-8 release. This is Zinc metalloproteinase-disintegrin-like berythractivase from Bothrops erythromelas (Caatinga lance head).